A 474-amino-acid polypeptide reads, in one-letter code: ATP synthase subunit beta 2 (474 aa).

157–164 (GGAGVGKT) is a binding site for ATP.

The protein belongs to the ATPase alpha/beta chains family. As to quaternary structure, F-type ATPases have 2 components, CF(1) - the catalytic core - and CF(0) - the membrane proton channel. CF(1) has five subunits: alpha(3), beta(3), gamma(1), delta(1), epsilon(1). CF(0) has three main subunits: a(1), b(2) and c(9-12). The alpha and beta chains form an alternating ring which encloses part of the gamma chain. CF(1) is attached to CF(0) by a central stalk formed by the gamma and epsilon chains, while a peripheral stalk is formed by the delta and b chains.

It is found in the cell inner membrane. The catalysed reaction is ATP + H2O + 4 H(+)(in) = ADP + phosphate + 5 H(+)(out). Produces ATP from ADP in the presence of a proton gradient across the membrane. The catalytic sites are hosted primarily by the beta subunits. The protein is ATP synthase subunit beta 2 of Polaromonas naphthalenivorans (strain CJ2).